Reading from the N-terminus, the 356-residue chain is NADH-quinone oxidoreductase subunit H (356 aa).

The next 9 helical transmembrane spans lie at 22–42, 59–79, 93–113, 124–144, 171–191, 198–218, 240–260, 285–305, and 321–341; these read GVVS…TAYL, PSLA…KLVF, FIIA…VIPI, IGGI…IIIA, MALS…IQIV, PIWL…SILA, VEYS…NMIL, IPGY…FLWI, and GLKV…TILV.

Belongs to the complex I subunit 1 family. In terms of assembly, NDH-1 is composed of 14 different subunits. Subunits NuoA, H, J, K, L, M, N constitute the membrane sector of the complex.

The protein localises to the cell inner membrane. It carries out the reaction a quinone + NADH + 5 H(+)(in) = a quinol + NAD(+) + 4 H(+)(out). Its function is as follows. NDH-1 shuttles electrons from NADH, via FMN and iron-sulfur (Fe-S) centers, to quinones in the respiratory chain. The immediate electron acceptor for the enzyme in this species is believed to be ubiquinone. Couples the redox reaction to proton translocation (for every two electrons transferred, four hydrogen ions are translocated across the cytoplasmic membrane), and thus conserves the redox energy in a proton gradient. This subunit may bind ubiquinone. This chain is NADH-quinone oxidoreductase subunit H, found in Orientia tsutsugamushi (strain Boryong) (Rickettsia tsutsugamushi).